We begin with the raw amino-acid sequence, 308 residues long: Regulating synaptic membrane exocytosis protein 3 (308 aa).

The segment at 86-120 is disordered; that stretch reads STETGIAVEMRSRVTRQGSRESTDGSTNSNSSDGT. Positions 109–120 are enriched in low complexity; that stretch reads DGSTNSNSSDGT. The region spanning 156-274 is the C2 domain; the sequence is PMGDVHIAIM…DLSAAVTGWY (119 aa). Phosphoserine occurs at positions 295 and 298.

Binds PPFIA3. Does not bind RAB3.

The protein localises to the synapse. Regulates synaptic membrane exocytosis. The polypeptide is Regulating synaptic membrane exocytosis protein 3 (RIMS3) (Homo sapiens (Human)).